An 842-amino-acid polypeptide reads, in one-letter code: Cullin-8 (842 aa).

Residues 1-50 (MINESVSKREGFHESISRETSASNALGLYNKFNDERNPRYRTMIAELHEF) are required for interaction with MMS1. Residues 755–765 (LQSSNTGGERT) are compositionally biased toward polar residues. The tract at residues 755 to 775 (LQSSNTGGERTSSAHHEGSNS) is disordered. A Glycyl lysine isopeptide (Lys-Gly) (interchain with G-Cter in NEDD8) cross-link involves residue Lys791.

This sequence belongs to the cullin family. Component of multiple cullin-RING ligases (CRLs) composed of 4 subunits: the RING protein HRT1, the cullin RTT101, a linker protein MMS1, and one of many alternative substrate receptors belonging to a protein family described as DCAF (DDB1- and CUL4-associated factor). Component of a RTT101(MMS1-MMS22) complex with the substrate receptor MMS22. This complex further interacts with RTT107 and CTF4 to form RTT101-MMS1-MMS22-RTT107 and RTT101-MMS1-MMS22-CTF4 complexes respectively. Component of a RTT101(MSS1-CRT10) complex with the substrate receptor CRT10. Component of a RTT101(MSS1-ESC2) complex with the potential substrate receptor ESC2. Component of a RTT101(MSS1-ORC5) complex with the potential substrate receptor ORC5. Interacts (via C-ter) with HRT1; required for ubiquitin-ligase activity. Interacts (via N-ter) with MMS1. Neddylated. HRT1-binding is necessary for RUB1/NEDD8 modification of RTT101. The modification enhances ubiquitin-ligase activity.

It localises to the cytoplasm. The protein localises to the nucleus. The protein operates within protein modification; protein ubiquitination. Functionally, core component of multiple cullin-RING-based E3 ubiquitin-protein ligase complexes (CRLs), which mediate the ubiquitination of target proteins. As a scaffold protein may contribute to catalysis through positioning of the substrate and the ubiquitin-conjugating enzyme. The CRL associates with CDC34 as the E2 ubiquitin-conjugating enzyme. The functional specificity of the CRL depends on the type of the associated substrate receptor protein. RTT101(MMS1-MMS22) promotes fork progression through damaged DNA or natural pause sites by stabilizing replication proteins like the replication fork-pausing complex (FPC) and leading-strand polymerase at stalled replication forks. RTT101(MMS1-MMS22) ubiquitinates the acetylated histones H3K56ac-H4 at lysine residues H3K121, H3K122 and H3K125. Ubiquitination is required for efficient histone deposition during replication-coupled nucleosome assembly, probably by facilitating the transfer of H3-H4 from ASF1 to other chaperones involved in histone deposition. RTT101(MMS1-CRT10) may regulate nucleotide synthesis through transcriptional regulation of ribonucleotide reductase. RTT101(MMS1) is also involved in the non-functional rRNA decay (NRD) of 25S rRNA through the selective, ubiquitination-dependent degradation of nonfunctional ribosomal particles. Ubiquitinates the FACT (facilitates chromatin transcription) complex subunit SPT16 in an MMS1-independent manner. Involved in regulation of Ty1 transposition and protects the genome from Ty1 integration upstream of tRNA genes. The chain is Cullin-8 (RTT101) from Saccharomyces cerevisiae (strain ATCC 204508 / S288c) (Baker's yeast).